We begin with the raw amino-acid sequence, 65 residues long: Large ribosomal subunit protein bL35 (65 aa).

Residues Met1–Val16 are compositionally biased toward basic residues. The disordered stretch occupies residues Met1–Gly25.

This sequence belongs to the bacterial ribosomal protein bL35 family.

The chain is Large ribosomal subunit protein bL35 from Herminiimonas arsenicoxydans.